A 416-amino-acid polypeptide reads, in one-letter code: Xyloglucan O-acetyltransferase 1 (416 aa).

Over 1–14 (MGLNEQQNVPSQRK) the chain is Cytoplasmic. The helical; Signal-anchor for type II membrane protein transmembrane segment at 15–35 (IIVFIVLAFIPIALFRLCFNN) threads the bilayer. Over 36–416 (PFSSIKDTSL…MIEMLRRWKV (381 aa)) the chain is Lumenal. 4 disulfide bridges follow: cysteine 79–cysteine 129, cysteine 100–cysteine 165, cysteine 109–cysteine 395, and cysteine 318–cysteine 391. N-linked (GlcNAc...) asparagine glycosylation occurs at asparagine 96. Residues 152 to 154 (GDS) carry the GDS motif motif. Catalysis depends on serine 154, which acts as the Nucleophile. 3 N-linked (GlcNAc...) asparagine glycosylation sites follow: asparagine 194, asparagine 269, and asparagine 319. The active-site Proton donor is aspartate 390. The short motif at 390 to 393 (DCLH) is the DXXH motif element. The active-site Proton acceptor is histidine 393.

It belongs to the PC-esterase family. TBL subfamily.

It is found in the golgi apparatus membrane. Functionally, xyloglucan acetyltransferase that catalyzes the acetylation of fucosylated Gal residues on xyloglucan side chains. Predominantly catalyze 6-O-monoacetylation of Gal residues in the Fuc-Gal-Xyl trisaccharide side chains of xyloglucan oligomers. Involved in xyloglucan specific O-acetylation in roots and rosette leaves. The chain is Xyloglucan O-acetyltransferase 1 from Arabidopsis thaliana (Mouse-ear cress).